Consider the following 434-residue polypeptide: MKPSKHLIFALFALAISQPTMAAPQPIDRVAVQINDGIVLESEITNMIDTVKANARAANQSLPSDSALRTQVIERLILTRLQLQMADRIGLHIGDLQLDQAIENIAREQKMTVAQMQQKIESEGLSFGQYREQLREEITLGEIQRIQVQRRIQVSPQEITGLVKLIQEQGMKDVEYQIGHILIDVPNNPNSEQLEASSKRANAVLERLKSGEDFRRTAIASSSGPKALEGGIWDYMNINEMPTLFAEVINGAKKGDIIGPIKSGAGFHIIKIMDARGLQTKEIEEVRARHILLKPSPILSEDRAKAMLEQFLKQIRSGEAKFEDLARQYSEDPGSAAKGGELGWAEPSIYVPEFAQTLNSLSQDQISEPFRTTHGWHITQLEERRKTDATDQFNTNRAHQLIFRRKFNEELQNWLDEMRADAYIEVFQPESNRG.

A signal peptide spans 1-22; that stretch reads MKPSKHLIFALFALAISQPTMA. PpiC domains follow at residues 173–274 and 283–383; these read DVEY…KIMD and IEEV…QLEE.

The protein localises to the periplasm. It catalyses the reaction [protein]-peptidylproline (omega=180) = [protein]-peptidylproline (omega=0). In terms of biological role, chaperone involved in the correct folding and assembly of outer membrane proteins. Recognizes specific patterns of aromatic residues and the orientation of their side chains, which are found more frequently in integral outer membrane proteins. May act in both early periplasmic and late outer membrane-associated steps of protein maturation. The sequence is that of Chaperone SurA from Shewanella sp. (strain MR-4).